The chain runs to 275 residues: Large ribosomal subunit protein uL2 (275 aa).

The tract at residues 224–257 (AMNPIDHPHGGGEGRTAAGRDPVSPWGTPTKGFR) is disordered.

It belongs to the universal ribosomal protein uL2 family. In terms of assembly, part of the 50S ribosomal subunit. Forms a bridge to the 30S subunit in the 70S ribosome.

Its function is as follows. One of the primary rRNA binding proteins. Required for association of the 30S and 50S subunits to form the 70S ribosome, for tRNA binding and peptide bond formation. It has been suggested to have peptidyltransferase activity; this is somewhat controversial. Makes several contacts with the 16S rRNA in the 70S ribosome. The chain is Large ribosomal subunit protein uL2 from Burkholderia mallei (strain NCTC 10247).